The following is a 316-amino-acid chain: L-lactate dehydrogenase (316 aa).

NAD(+) contacts are provided by residues Met14, 14-150 (MIGG…IIGL), Ile15, Asp35, Tyr67, Gly81, Phe82, Val125, Asn127, and Leu150. Residue Arg95 participates in substrate binding. Arg158 and His182 together coordinate substrate. The active-site Proton acceptor is His182.

This sequence belongs to the LDH/MDH superfamily. LDH family. Homotetramer.

It catalyses the reaction (S)-lactate + NAD(+) = pyruvate + NADH + H(+). The protein operates within fermentation; pyruvate fermentation to lactate; (S)-lactate from pyruvate: step 1/1. The protein is L-lactate dehydrogenase of Plasmodium falciparum (isolate CDC / Honduras).